The sequence spans 417 residues: Testis-specific Y-encoded-like protein 5 (417 aa).

Residues 1-25 show a composition bias toward basic residues; it reads MSGRSRGRKSSRAKNRGKGRAKARV. Disordered regions lie at residues 1-55, 93-112, 127-202, and 391-417; these read MSGR…QVQA, AAGD…AASL, GTVG…EGSM, and KGKE…SQSN. Basic and acidic residues predominate over residues 27–37; that stretch reads PAPDDAPRDPD. Over residues 93 to 103 the composition is skewed to low complexity; that stretch reads AAGDHGQAAAR. The span at 182–191 shows a compositional bias: basic and acidic residues; it reads GEEKKEERDA. Over residues 406–417 the composition is skewed to polar residues; that stretch reads METTQPGVSQSN.

It belongs to the nucleosome assembly protein (NAP) family. As to quaternary structure, interacts with USP7.

In terms of biological role, involved in modulation of cell growth and cellular response to gamma radiation probably via regulation of the Akt signaling pathway. Involved in regulation of p53/TP53. Suppresses p53/TP53 protein levels and promotes its ubiquitination; the function is dependent on USP7 and independent on MDM2. Proposed to displace p53/TP53 from interaction with USP7. The polypeptide is Testis-specific Y-encoded-like protein 5 (TSPYL5) (Homo sapiens (Human)).